We begin with the raw amino-acid sequence, 510 residues long: Probable cytosol aminopeptidase (510 aa).

2 residues coordinate Mn(2+): Lys-268 and Asp-273. Lys-280 is a catalytic residue. Residues Asp-291, Asp-350, and Glu-352 each contribute to the Mn(2+) site. The active site involves Arg-354.

It belongs to the peptidase M17 family. Mn(2+) is required as a cofactor.

The protein resides in the cytoplasm. It carries out the reaction Release of an N-terminal amino acid, Xaa-|-Yaa-, in which Xaa is preferably Leu, but may be other amino acids including Pro although not Arg or Lys, and Yaa may be Pro. Amino acid amides and methyl esters are also readily hydrolyzed, but rates on arylamides are exceedingly low.. The enzyme catalyses Release of an N-terminal amino acid, preferentially leucine, but not glutamic or aspartic acids.. Presumably involved in the processing and regular turnover of intracellular proteins. Catalyzes the removal of unsubstituted N-terminal amino acids from various peptides. This is Probable cytosol aminopeptidase from Micrococcus luteus (strain ATCC 4698 / DSM 20030 / JCM 1464 / CCM 169 / CCUG 5858 / IAM 1056 / NBRC 3333 / NCIMB 9278 / NCTC 2665 / VKM Ac-2230) (Micrococcus lysodeikticus).